The sequence spans 173 residues: Photosystem I assembly protein Ycf3 (173 aa).

TPR repeat units follow at residues 35-68, 72-105, and 120-153; these read AFVY…EEDP, SYIL…NPRM, and GEKA…APNN.

The protein belongs to the Ycf3 family.

It is found in the cellular thylakoid membrane. Its function is as follows. Essential for the assembly of the photosystem I (PSI) complex. May act as a chaperone-like factor to guide the assembly of the PSI subunits. This chain is Photosystem I assembly protein Ycf3, found in Rippkaea orientalis (strain PCC 8801 / RF-1) (Cyanothece sp. (strain PCC 8801)).